The primary structure comprises 78 residues: D-alanyl carrier protein (78 aa).

Residues 1–78 enclose the Carrier domain; that stretch reads MEFREQVLDL…KIVEVLEELR (78 aa). S36 bears the O-(pantetheine 4'-phosphoryl)serine mark.

This sequence belongs to the DltC family. In terms of processing, 4'-phosphopantetheine is transferred from CoA to a specific serine of apo-DCP.

Its subcellular location is the cytoplasm. The protein operates within cell wall biogenesis; lipoteichoic acid biosynthesis. Its function is as follows. Carrier protein involved in the D-alanylation of lipoteichoic acid (LTA). The loading of thioester-linked D-alanine onto DltC is catalyzed by D-alanine--D-alanyl carrier protein ligase DltA. The DltC-carried D-alanyl group is further transferred to cell membrane phosphatidylglycerol (PG) by forming an ester bond, probably catalyzed by DltD. D-alanylation of LTA plays an important role in modulating the properties of the cell wall in Gram-positive bacteria, influencing the net charge of the cell wall. The protein is D-alanyl carrier protein of Staphylococcus xylosus.